Reading from the N-terminus, the 866-residue chain is Replication factor C small subunit (866 aa).

The region spanning 183–313 (WLGYFIGDGH…VTYALAGFGI (131 aa)) is the DOD-type homing endonuclease domain.

This sequence belongs to the activator 1 small subunits family. RfcS subfamily. Heteromultimer composed of small subunits (RfcS) and large subunits (RfcL). This protein undergoes a protein self splicing that involves a post-translational excision of the intervening region (intein) followed by peptide ligation.

Part of the RFC clamp loader complex which loads the PCNA sliding clamp onto DNA. This is Replication factor C small subunit (rfcS) from Thermococcus kodakarensis (strain ATCC BAA-918 / JCM 12380 / KOD1) (Pyrococcus kodakaraensis (strain KOD1)).